The chain runs to 434 residues: D-amino acid dehydrogenase (434 aa).

3–17 (VIVLGSGVIGTTTAY) provides a ligand contact to FAD.

This sequence belongs to the DadA oxidoreductase family. Requires FAD as cofactor.

It catalyses the reaction a D-alpha-amino acid + A + H2O = a 2-oxocarboxylate + AH2 + NH4(+). Its function is as follows. Oxidative deamination of D-amino acids. The polypeptide is D-amino acid dehydrogenase (Bordetella bronchiseptica (strain ATCC BAA-588 / NCTC 13252 / RB50) (Alcaligenes bronchisepticus)).